A 355-amino-acid polypeptide reads, in one-letter code: 6-aminohexanoate-oligomer endohydrolase (355 aa).

Threonine 267 functions as the Nucleophile in the catalytic mechanism.

Belongs to the peptidase S58 family. As to quaternary structure, heterotetramer composed of 4 alpha/beta heterodimers. Expressed as an inactive precursor that is cleaved autocatalytically at Asn266/Thr267 to generate an active enzyme composed of an alpha subunit and a beta subunit.

It catalyses the reaction [N-(6-aminohexanoyl)]n + H2O = [N-(6-aminohexanoyl)]n-x + [N-(6-aminohexanoyl)]x.. Its pathway is xenobiotic degradation; nylon-6 oligomer degradation. Involved in the degradation of nylon-6 oligomers. Degrades cyclic and linear oligomers of 6-aminohexanoate (Ahx) with a degree of polymerization greater than three by an endo-type mode. Cannot use Ahx cyclic dimer or the Ahx linear dimer. In Agromyces sp. (strain KY5R), this protein is 6-aminohexanoate-oligomer endohydrolase.